We begin with the raw amino-acid sequence, 669 residues long: MWTLAGQGWWRGRALAAWVTEAARKGLLWPHLAPARGTAAESRAPDRCYSSADRKEKIDMSCFPVENTRNFSIIAHVDHGKSTLADRLLELTGAIDKTKNNKQVLDKLQVERERGITVKAQTASLFYNYEGKQYLLNLIDTPGHVDFSYEVSRSLSACQGVLLVVDANEGIQAQTVANFFLAFEAQLSIIPVINKIDLKNADPERVEKQIEKVFDIPGDECIKISAKLGTNVESVLDAVIKRIPFPKAHCRNPLRALVFDSTFDQYRGVIANVALFDGVVSKGDKIVSAHTQKTYEVNEVGVLNPNEQPTHKLYAGQVGYLIAGMKDVTEAQIGDTLYLHKQPVEPLPGFKSAKPMVFAGMYPVDQSEYNNLKSAIEKLTLNDSSVVVHRDSSLALGAGWRLGFLGLLHMEVFNQRLEQEYNASVILTTPTVPYKAVLSSAKLIKEYREKEITIINPAQFPDKSKVTEYLEPVVLGTIITPDEYTGKIMMLCQARRAVQKNMMYIDQNRVMLKYLFPLNEIVVDFYDSLKSLSSGYASFDYEDAGYQTAELVKMDILLNGSIVEELVTVVHKDKAYSVGKAICERLKDSLPRQLFEIAIQAALGSKIIARETVKAYRKNVLAKCYGGDITRKMKLLKRQAEGKKKLRKVGNVEVPKDAFIKVLKTQSDK.

The transit peptide at 1–49 (MWTLAGQGWWRGRALAAWVTEAARKGLLWPHLAPARGTAAESRAPDRCY) directs the protein to the mitochondrion. The 182-residue stretch at 66 to 247 (ENTRNFSIIA…AVIKRIPFPK (182 aa)) folds into the tr-type G domain. GTP contacts are provided by residues 75–82 (AHVDHGKS), 140–144 (DTPGH), and 194–197 (NKID).

It belongs to the TRAFAC class translation factor GTPase superfamily. Classic translation factor GTPase family. LepA subfamily.

The protein resides in the mitochondrion inner membrane. The catalysed reaction is GTP + H2O = GDP + phosphate + H(+). In terms of biological role, promotes mitochondrial protein synthesis. May act as a fidelity factor of the translation reaction, by catalyzing a one-codon backward translocation of tRNAs on improperly translocated ribosomes. Binds to mitochondrial ribosomes in a GTP-dependent manner. The polypeptide is Translation factor GUF1, mitochondrial (Bos taurus (Bovine)).